Here is a 361-residue protein sequence, read N- to C-terminus: uncharacterized protein (361 aa).

The first 28 residues, methionine 1–phenylalanine 28, serve as a signal peptide directing secretion.

This is an uncharacterized protein from Ruminiclostridium cellulolyticum (strain ATCC 35319 / DSM 5812 / JCM 6584 / H10) (Clostridium cellulolyticum).